The following is a 177-amino-acid chain: Large ribosomal subunit protein uL5 (177 aa).

The protein belongs to the universal ribosomal protein uL5 family. In terms of assembly, part of the 50S ribosomal subunit; part of the 5S rRNA/L5/L18/L25 subcomplex. Contacts the 5S rRNA and the P site tRNA. Forms a bridge to the 30S subunit in the 70S ribosome.

In terms of biological role, this is one of the proteins that bind and probably mediate the attachment of the 5S RNA into the large ribosomal subunit, where it forms part of the central protuberance. In the 70S ribosome it contacts protein S13 of the 30S subunit (bridge B1b), connecting the 2 subunits; this bridge is implicated in subunit movement. Contacts the P site tRNA; the 5S rRNA and some of its associated proteins might help stabilize positioning of ribosome-bound tRNAs. This is Large ribosomal subunit protein uL5 from Anaplasma phagocytophilum (strain HZ).